The following is a 537-amino-acid chain: 2-isopropylmalate synthase (537 aa).

Residues 8–273 (IIIFDTTLRD…FLGRPVDSME (266 aa)) form the Pyruvate carboxyltransferase domain. The Mn(2+) site is built by aspartate 17, histidine 208, histidine 210, and asparagine 244. Positions 408 to 537 (RLELVQVSCG…PSEPVLTSKN (130 aa)) are regulatory domain.

It belongs to the alpha-IPM synthase/homocitrate synthase family. LeuA type 1 subfamily. Homodimer. Requires Mn(2+) as cofactor.

Its subcellular location is the cytoplasm. The catalysed reaction is 3-methyl-2-oxobutanoate + acetyl-CoA + H2O = (2S)-2-isopropylmalate + CoA + H(+). Its pathway is amino-acid biosynthesis; L-leucine biosynthesis; L-leucine from 3-methyl-2-oxobutanoate: step 1/4. Its function is as follows. Catalyzes the condensation of the acetyl group of acetyl-CoA with 3-methyl-2-oxobutanoate (2-ketoisovalerate) to form 3-carboxy-3-hydroxy-4-methylpentanoate (2-isopropylmalate). This is 2-isopropylmalate synthase from Crocosphaera subtropica (strain ATCC 51142 / BH68) (Cyanothece sp. (strain ATCC 51142)).